The following is a 75-amino-acid chain: Alpha-elapitoxin-Bc2b (75 aa).

The signal sequence occupies residues 1-2 (YT). 5 disulfides stabilise this stretch: C5-C24, C17-C45, C30-C34, C49-C60, and C61-C66.

In terms of assembly, monomer in solution, homodimer in crystal state. In terms of tissue distribution, expressed by the venom gland.

Its subcellular location is the secreted. Binds to muscular and neuronal nicotinic acetylcholine receptor (nAChR) and inhibits acetylcholine from binding to the receptor, thereby impairing neuromuscular and neuronal transmission. Blocks muscle type nAChR. Also binds with high affinity to alpha-7/CHRNA7 nAChRs. In addition, shows a weak inhibition of neuronal alpha-3-beta-2/CHRNA3-CHRNB2 nAChR. Selectively binds to alpha-1-delta subunit interface of the mouse muscle nicotinic acetylcholine receptor, with a 10-fold higher affinity for the adult than for the fetal receptors. In vivo, when intraperitoneally injected into mice, causes flaccid paralysis and respiratory distress, followed by death within 2-4 hours. The polypeptide is Alpha-elapitoxin-Bc2b (Bungarus candidus (Malayan krait)).